A 413-amino-acid chain; its full sequence is Putative F-box protein At3g17560 (413 aa).

The F-box domain occupies 9 to 55 (TKLLFDLPQDVIEEIFSKVPVTCLRRIRSTCKRLYALLKDRGFIRKH).

The chain is Putative F-box protein At3g17560 from Arabidopsis thaliana (Mouse-ear cress).